Reading from the N-terminus, the 252-residue chain is 1-(5-phosphoribosyl)-5-[(5-phosphoribosylamino)methylideneamino] imidazole-4-carboxamide isomerase (252 aa).

The active-site Proton acceptor is the Asp-10. Asp-129 acts as the Proton donor in catalysis.

This sequence belongs to the HisA/HisF family.

It localises to the cytoplasm. The enzyme catalyses 1-(5-phospho-beta-D-ribosyl)-5-[(5-phospho-beta-D-ribosylamino)methylideneamino]imidazole-4-carboxamide = 5-[(5-phospho-1-deoxy-D-ribulos-1-ylimino)methylamino]-1-(5-phospho-beta-D-ribosyl)imidazole-4-carboxamide. The protein operates within amino-acid biosynthesis; L-histidine biosynthesis; L-histidine from 5-phospho-alpha-D-ribose 1-diphosphate: step 4/9. The chain is 1-(5-phosphoribosyl)-5-[(5-phosphoribosylamino)methylideneamino] imidazole-4-carboxamide isomerase from Frankia casuarinae (strain DSM 45818 / CECT 9043 / HFP020203 / CcI3).